Consider the following 240-residue polypeptide: Purine nucleoside phosphorylase RC0672 (240 aa).

Zn(2+) contacts are provided by H60, C96, and H113.

Belongs to the purine nucleoside phosphorylase YfiH/LACC1 family. As to quaternary structure, homodimer. It depends on Cu(2+) as a cofactor. Zn(2+) serves as cofactor.

It carries out the reaction adenosine + phosphate = alpha-D-ribose 1-phosphate + adenine. The enzyme catalyses S-methyl-5'-thioadenosine + phosphate = 5-(methylsulfanyl)-alpha-D-ribose 1-phosphate + adenine. It catalyses the reaction inosine + phosphate = alpha-D-ribose 1-phosphate + hypoxanthine. The catalysed reaction is adenosine + H2O + H(+) = inosine + NH4(+). Its function is as follows. Purine nucleoside enzyme that catalyzes the phosphorolysis of adenosine and inosine nucleosides, yielding D-ribose 1-phosphate and the respective free bases, adenine and hypoxanthine. Also catalyzes the phosphorolysis of S-methyl-5'-thioadenosine into adenine and S-methyl-5-thio-alpha-D-ribose 1-phosphate. Also has adenosine deaminase activity. This is Purine nucleoside phosphorylase RC0672 from Rickettsia conorii (strain ATCC VR-613 / Malish 7).